The following is a 264-amino-acid chain: Vitellin-degrading protease (264 aa).

The N-terminal stretch at 1 to 15 (MTNSLLICFTILGLA) is a signal peptide. Positions 16-27 (ASSPTKPIGDIR) are cleaved as a propeptide — activation peptide. One can recognise a Peptidase S1 domain in the interval 28–253 (IVGGEDIVIT…LREWVDENIT (226 aa)). The cysteines at positions 53 and 69 are disulfide-linked. Residues His-68 and Asp-113 each act as charge relay system in the active site. Cys-178 and Cys-194 are joined by a disulfide. Asp-203 contributes to the substrate binding site. Cys-205 and Cys-229 form a disulfide bridge. Ser-209 acts as the Charge relay system in catalysis. Residue Asn-251 is glycosylated (N-linked (GlcNAc...) asparagine).

Belongs to the peptidase S1 family. Cleavage after Arg-27 leads to beta-VTN protease and subsequent cleavage after Arg-89 leads to alpha-VTN.

Its function is as follows. Responsible for the degradation of vitellin in eggs at the head pigmentation stage. This chain is Vitellin-degrading protease, found in Bombyx mori (Silk moth).